A 140-amino-acid chain; its full sequence is ATP synthase epsilon chain (140 aa).

It belongs to the ATPase epsilon chain family. As to quaternary structure, F-type ATPases have 2 components, CF(1) - the catalytic core - and CF(0) - the membrane proton channel. CF(1) has five subunits: alpha(3), beta(3), gamma(1), delta(1), epsilon(1). CF(0) has three main subunits: a, b and c.

It localises to the cell inner membrane. In terms of biological role, produces ATP from ADP in the presence of a proton gradient across the membrane. This Stenotrophomonas maltophilia (strain R551-3) protein is ATP synthase epsilon chain.